The sequence spans 107 residues: MMKVLVVVALLVTLISYSSSEGIDDLEADELLSLMANEQTRKERIPKHHECTSNKHGCCRGNFFKYKCQCTTVVTQDGEQTERCFCGTPPHHKAAELVVGFGKKIFG.

An N-terminal signal peptide occupies residues methionine 1–serine 20. A propeptide spanning residues glutamate 21–arginine 41 is cleaved from the precursor. Disulfide bonds link cysteine 51-cysteine 68, cysteine 58-cysteine 86, and cysteine 70-cysteine 84.

This sequence belongs to the neurotoxin 19 (CSTX) family. 04 (U1-Lctx) subfamily. As to expression, expressed by the venom gland.

Its subcellular location is the secreted. This chain is U1-lycotoxin-Ls1g, found in Lycosa singoriensis (Wolf spider).